The primary structure comprises 405 residues: Diaminopimelate decarboxylase (405 aa).

Residue Lys46 is modified to N6-(pyridoxal phosphate)lysine. Residues Gly225 and 259–262 (EPGR) contribute to the pyridoxal 5'-phosphate site. Residues Arg262, Arg298, and Tyr302 each contribute to the substrate site. The Proton donor role is filled by Cys329. The substrate site is built by Glu330 and Tyr358. Position 358 (Tyr358) interacts with pyridoxal 5'-phosphate.

It belongs to the Orn/Lys/Arg decarboxylase class-II family. LysA subfamily. In terms of assembly, homodimer. Pyridoxal 5'-phosphate is required as a cofactor.

It carries out the reaction meso-2,6-diaminopimelate + H(+) = L-lysine + CO2. Its pathway is amino-acid biosynthesis; L-lysine biosynthesis via DAP pathway; L-lysine from DL-2,6-diaminopimelate: step 1/1. Its function is as follows. Specifically catalyzes the decarboxylation of meso-diaminopimelate (meso-DAP) to L-lysine. This is Diaminopimelate decarboxylase from Helicobacter pylori (strain ATCC 700392 / 26695) (Campylobacter pylori).